The chain runs to 118 residues: MKKQNLVSFSDNLEAMRKFSETYAKRTGTFFCADNSVTAVVIEGLARHKDKYGAPLCPCRHYEDKKAEISATYWNCPCVPMRERKECHCMLFLTPDNEFTSDLQEIDKTTLLEKIASS.

C57 contacts [4Fe-4S] cluster. Residue C59 is the Nucleophile of the active site. C59 and C89 are joined by a disulfide. 3 residues coordinate [4Fe-4S] cluster: C76, C78, and C87.

It belongs to the ferredoxin thioredoxin reductase beta subunit family. In terms of assembly, heterodimer of subunit A (variable subunit) and subunit B (catalytic subunit). Heterodimeric FTR forms a complex with ferredoxin and thioredoxin. [4Fe-4S] cluster serves as cofactor.

It localises to the plastid. Its subcellular location is the chloroplast. The enzyme catalyses [thioredoxin]-disulfide + 2 reduced [2Fe-2S]-[ferredoxin] + 2 H(+) = [thioredoxin]-dithiol + 2 oxidized [2Fe-2S]-[ferredoxin]. Catalytic subunit of the ferredoxin-thioredoxin reductase (FTR), which catalyzes the two-electron reduction of thioredoxins by the electrons provided by reduced ferredoxin. This chain is Ferredoxin-thioredoxin reductase, catalytic chain (ftrB), found in Porphyra purpurea (Red seaweed).